A 177-amino-acid chain; its full sequence is MSRVANSPVQLPSGVELKQNGQDVTVKGGKGQLAIQIHDSVELKIEENVVTFAARDGAKASRAMAGTMRALVNNMVTGVSQGFEKKLVLNGVGYRAKAAGSTLNLTLGFSHPIDYDLPEGVTAETPTQTEILLKSANKQLLGQVASEVRAFRPPEPYKGKGVRYADEFVRRKEAKKK.

Belongs to the universal ribosomal protein uL6 family. Part of the 50S ribosomal subunit.

Functionally, this protein binds to the 23S rRNA, and is important in its secondary structure. It is located near the subunit interface in the base of the L7/L12 stalk, and near the tRNA binding site of the peptidyltransferase center. The protein is Large ribosomal subunit protein uL6 of Teredinibacter turnerae (strain ATCC 39867 / T7901).